A 150-amino-acid chain; its full sequence is Large ribosomal subunit protein eL19 (150 aa).

The disordered stretch occupies residues 56–90; that stretch reads RGISSGRLKERKHKRRSKGEGRKHGSRKGKSGART.

The protein belongs to the eukaryotic ribosomal protein eL19 family. As to quaternary structure, part of the 50S ribosomal subunit.

Binds to the 23S rRNA. This Sulfolobus acidocaldarius (strain ATCC 33909 / DSM 639 / JCM 8929 / NBRC 15157 / NCIMB 11770) protein is Large ribosomal subunit protein eL19.